The primary structure comprises 366 residues: Spermine synthase (366 aa).

The residue at position 2 (Ala-2) is an N-acetylalanine. Residue Ser-57 is modified to Phosphoserine. Positions 122-362 (RYWPTADGRL…ELWVFYTVWK (241 aa)) constitute a PABS domain. Gln-148 is a binding site for S-adenosyl 3-(methylsulfanyl)propylamine. Spermidine contacts are provided by Tyr-177 and Asp-201. Residues Glu-220 and 255-256 (DC) each bind S-adenosyl 3-(methylsulfanyl)propylamine. Asp-276 acts as the Proton acceptor in catalysis. Positions 351 and 353 each coordinate spermidine.

This sequence belongs to the spermidine/spermine synthase family. As to quaternary structure, homodimer. Dimerization is mediated through the N-terminal domain and seems to be required for activity as deletion of the N-terminal domain causes complete loss of activity.

The enzyme catalyses S-adenosyl 3-(methylsulfanyl)propylamine + spermidine = spermine + S-methyl-5'-thioadenosine + H(+). The protein operates within amine and polyamine biosynthesis; spermine biosynthesis; spermine from spermidine: step 1/1. In terms of biological role, catalyzes the production of spermine from spermidine and decarboxylated S-adenosylmethionine (dcSAM). This is Spermine synthase from Homo sapiens (Human).